A 636-amino-acid polypeptide reads, in one-letter code: Chaperone protein DnaK (636 aa).

At Thr198 the chain carries Phosphothreonine; by autocatalysis. A disordered region spans residues 602-636 (QAEGAQPGGEAAGEASAKDEKVVDADFEEVKDDKK). Residues 626–636 (ADFEEVKDDKK) are compositionally biased toward acidic residues.

This sequence belongs to the heat shock protein 70 family.

In terms of biological role, acts as a chaperone. In Geobacter sulfurreducens (strain ATCC 51573 / DSM 12127 / PCA), this protein is Chaperone protein DnaK.